Consider the following 357-residue polypeptide: Enoyl-[acyl-carrier-protein] reductase, mitochondrial (357 aa).

A mitochondrion-targeting transit peptide spans 1 to 19 (MLRRGFLSRINAAQWSRQM). The region spanning 36-352 (EVLQLVEDKL…FKGFTGKKYI (317 aa)) is the Enoyl reductase (ER) domain. Residue tyrosine 74 is the Proton donor of the active site. Residues asparagine 147, 173–176 (NSAV), 196–198 (RDR), 264–267 (YGGM), 289–291 (FWM), lysine 349, and lysine 350 contribute to the NADP(+) site.

This sequence belongs to the zinc-containing alcohol dehydrogenase family. Quinone oxidoreductase subfamily. As to quaternary structure, homodimer. In terms of tissue distribution, expressed in the central nervous system.

It localises to the mitochondrion. It carries out the reaction a 2,3-saturated acyl-[ACP] + NADP(+) = a (2E)-enoyl-[ACP] + NADPH + H(+). Its function is as follows. Catalyzes the NADPH-dependent reduction of trans-2-enoyl thioesters in mitochondrial fatty acid synthesis (fatty acid synthesis type II). Fatty acid chain elongation in mitochondria uses acyl carrier protein (ACP) as an acyl group carrier, but the enzyme accepts both ACP and CoA thioesters as substrates in vitro. Involved in iron homeostasis; affecting Fe-S cluster assembly and ceramide metabolism. Required for proper morphology and bioenergetic functions of mitochondria. Required for maintenance of neurons, including photoreceptor neurons. The sequence is that of Enoyl-[acyl-carrier-protein] reductase, mitochondrial from Drosophila melanogaster (Fruit fly).